We begin with the raw amino-acid sequence, 88 residues long: Small ribosomal subunit protein uS17 (88 aa).

Belongs to the universal ribosomal protein uS17 family. As to quaternary structure, part of the 30S ribosomal subunit.

One of the primary rRNA binding proteins, it binds specifically to the 5'-end of 16S ribosomal RNA. The chain is Small ribosomal subunit protein uS17 from Dechloromonas aromatica (strain RCB).